The sequence spans 259 residues: Ribosome maturation factor RimP (259 aa).

Basic and acidic residues predominate over residues 186–195 (RGKQAERELK). Residues 186–259 (RGKQAERELK…RGDTDLSEGD (74 aa)) are disordered. The span at 239 to 248 (KQHRLAAGRS) shows a compositional bias: basic residues.

Belongs to the RimP family.

It is found in the cytoplasm. In terms of biological role, required for maturation of 30S ribosomal subunits. The polypeptide is Ribosome maturation factor RimP (Rhodopseudomonas palustris (strain HaA2)).